A 544-amino-acid polypeptide reads, in one-letter code: Chaperonin GroEL 3 (544 aa).

ATP is bound by residues 30–33, lysine 51, 87–91, glycine 415, and aspartate 495; these read TLGP and DGTTT.

Belongs to the chaperonin (HSP60) family. As to quaternary structure, forms a cylinder of 14 subunits composed of two heptameric rings stacked back-to-back. Interacts with the co-chaperonin GroES.

The protein resides in the cytoplasm. It carries out the reaction ATP + H2O + a folded polypeptide = ADP + phosphate + an unfolded polypeptide.. In terms of biological role, together with its co-chaperonin GroES, plays an essential role in assisting protein folding. The GroEL-GroES system forms a nano-cage that allows encapsulation of the non-native substrate proteins and provides a physical environment optimized to promote and accelerate protein folding. The sequence is that of Chaperonin GroEL 3 from Psychromonas ingrahamii (strain DSM 17664 / CCUG 51855 / 37).